A 229-amino-acid chain; its full sequence is Large ribosomal subunit protein uL1 (229 aa).

The protein belongs to the universal ribosomal protein uL1 family. As to quaternary structure, part of the 50S ribosomal subunit.

In terms of biological role, binds directly to 23S rRNA. The L1 stalk is quite mobile in the ribosome, and is involved in E site tRNA release. Functionally, protein L1 is also a translational repressor protein, it controls the translation of the L11 operon by binding to its mRNA. In Histophilus somni (strain 129Pt) (Haemophilus somnus), this protein is Large ribosomal subunit protein uL1.